Here is a 179-residue protein sequence, read N- to C-terminus: MNKSMLAGIGIGVAAALGVAAVASLNVFERGPQYAQVVSATPIKETVKTPRQECRNVTVTHRRPVQDENRITGSVLGAVAGGVIGHQFGGGRGKDVATVVGALGGGYAGNQIQGSLQESDTYTTTQQRCKTVYDKSEKMLGYDVTYKIGDQQGKIRMDRDPGTQIPLDSNGQLILNNKV.

The helical transmembrane segment at Met5–Leu25 threads the bilayer.

This sequence to Rickettsia 17 kDa surface antigen.

It is found in the membrane. This is an uncharacterized protein from Escherichia coli O6:H1 (strain CFT073 / ATCC 700928 / UPEC).